A 261-amino-acid chain; its full sequence is MRILITNDDGIASPGLRAAVRACRSVGEVTVVAPATQQSGVGRSISLLEPVRVEEIEVEGVDALAISGTPADAVLIGAFSIMDEPPDLVVSGINLGENVSADVTTSGTVGAALEAYGNGIPAIAISQEVRDARARVDNNAKNVDFTLAIRVLKALLEAIRGANWEGVLNVNVPDPDRWNGEIKVVPLAFTMYRPRIEKRYDPRGRRYYWIDGEIIQDPPEGTDLYELQRGSIVITPLTTDVTGDLDAAENVIKELRRALRG.

A divalent metal cation is bound by residues Asp8, Asp9, Ser39, and Asn94.

Belongs to the SurE nucleotidase family. A divalent metal cation is required as a cofactor.

Its subcellular location is the cytoplasm. It carries out the reaction a ribonucleoside 5'-phosphate + H2O = a ribonucleoside + phosphate. Functionally, nucleotidase that shows phosphatase activity on nucleoside 5'-monophosphates. The protein is 5'-nucleotidase SurE of Methanopyrus kandleri (strain AV19 / DSM 6324 / JCM 9639 / NBRC 100938).